A 255-amino-acid polypeptide reads, in one-letter code: MRHPLVMGNWKLNGSTHMVNELITGLRQELSSVTGCDVAIAPPALYLSQAKQALAGSRIALGAQDVDVNLSGAFTGETSATMLKDIGAEYIIIGHSERRTYHQESDEFIAKKFAILKQQGLIPVLCIGETEQENEAGQTESVCARQIDAVLNTLGVAAFQGAVIAYEPVWAIGTGKSATPAQAQAVHKFIRDHIAQKDAAIAQQIIIQYGGSVNADNAAELFSQPDIDGALVGGASLKANAFAVIVKAAAAAKKA.

Substrate is bound at residue 9–11 (NWK). Histidine 95 (electrophile) is an active-site residue. The active-site Proton acceptor is glutamate 167. Substrate contacts are provided by residues glycine 173, serine 212, and 233–234 (GG).

Belongs to the triosephosphate isomerase family. As to quaternary structure, homodimer.

The protein resides in the cytoplasm. The catalysed reaction is D-glyceraldehyde 3-phosphate = dihydroxyacetone phosphate. It participates in carbohydrate biosynthesis; gluconeogenesis. The protein operates within carbohydrate degradation; glycolysis; D-glyceraldehyde 3-phosphate from glycerone phosphate: step 1/1. In terms of biological role, involved in the gluconeogenesis. Catalyzes stereospecifically the conversion of dihydroxyacetone phosphate (DHAP) to D-glyceraldehyde-3-phosphate (G3P). The polypeptide is Triosephosphate isomerase (Photorhabdus laumondii subsp. laumondii (strain DSM 15139 / CIP 105565 / TT01) (Photorhabdus luminescens subsp. laumondii)).